We begin with the raw amino-acid sequence, 471 residues long: A-type ATP synthase subunit B (471 aa).

The protein belongs to the ATPase alpha/beta chains family. In terms of assembly, has multiple subunits with at least A(3), B(3), C, D, E, F, H, I and proteolipid K(x).

The protein localises to the cell membrane. Its function is as follows. Component of the A-type ATP synthase that produces ATP from ADP in the presence of a proton gradient across the membrane. The B chain is a regulatory subunit. This Halobacterium salinarum (strain ATCC 29341 / DSM 671 / R1) protein is A-type ATP synthase subunit B.